The primary structure comprises 259 residues: Binding partner of ACD11 1 (259 aa).

Residues 6-77 form the RRM domain; it reads RSVKVGNLSS…QSVIIELAPN (72 aa). The disordered stretch occupies residues 219–259; it reads GEVGQKTKEKVEAEQPSQPAQSQQQLPEGYSPIHSSEYSKN. The span at 232-243 shows a compositional bias: low complexity; it reads EQPSQPAQSQQQ.

Interacts with ACD11, PR1F2 and PR1F3.

The protein resides in the cytoplasm. It localises to the membrane. The polypeptide is Binding partner of ACD11 1 (BPA1) (Arabidopsis thaliana (Mouse-ear cress)).